We begin with the raw amino-acid sequence, 607 residues long: Matrix metalloproteinase-16 (607 aa).

Residues 1–31 (MILLAFSSGRRLDFVHRSGVFFFQTLLWILC) form the signal peptide. A propeptide spanning residues 32–119 (ATVCGTEQYF…SSKFNIRRKR (88 aa)) is cleaved from the precursor. Asn83 carries an N-linked (GlcNAc...) asparagine glycan. Positions 99–106 (PRCGVPDQ) match the Cysteine switch motif. Residue Cys101 coordinates Zn(2+). Over 120–564 (YALTGQKWQH…LDNTASTVKA (445 aa)) the chain is Extracellular. Asp183 provides a ligand contact to Ca(2+). Residues His193 and Asp195 each coordinate Zn(2+). The Ca(2+) site is built by Asp200, Gly201, Gly203, and Phe205. His208 is a binding site for Zn(2+). Ca(2+)-binding residues include Gly215, Gly217, and Asp219. His221 contacts Zn(2+). 2 residues coordinate Ca(2+): Asp223 and Glu226. Residue His246 participates in Zn(2+) binding. Residue Glu247 is part of the active site. Residues His250 and His256 each coordinate Zn(2+). The disordered stretch occupies residues 281–340 (DDLQGIQKIYGPPDKIPPPTRPLPTVPPHRSVPPADPRKNDRPKPPRPPTGRPSYPGAKP). The span at 294-315 (DKIPPPTRPLPTVPPHRSVPPA) shows a compositional bias: pro residues. 4 Hemopexin repeats span residues 340–388 (PNIC…WRGL), 389–434 (PPSI…GNGI), 436–484 (PHGI…KGIP), and 485–532 (ESPQ…FMGC). Cys343 and Cys532 are joined by a disulfide. Residues 565 to 585 (IAIVIPCILALCLLVLVYTVF) form a helical membrane-spanning segment. The Cytoplasmic portion of the chain corresponds to 586-607 (QFKRKGTPRHILYCKRSMQEWV).

Belongs to the peptidase M10A family. Interacts with CSPG4 through CSPG4 chondroitin sulfate glycosaminoglycan. Requires Zn(2+) as cofactor. Ca(2+) is required as a cofactor. Post-translationally, the precursor is cleaved by a furin endopeptidase. As to expression, strongly expressed in the lung, brain and smooth muscle cells. Weakly detectable in the spleen and liver and indetectable in the heart, skeletal muscle and kidney.

It localises to the cell membrane. Its subcellular location is the secreted. The protein resides in the extracellular space. It is found in the extracellular matrix. Endopeptidase that degrades various components of the extracellular matrix, such as collagen type III and fibronectin. Activates progelatinase A. Involved in the matrix remodeling of blood vessels. The short isoform efficiently converts progelatinase A to the intermediate form but not to the mature one. It has no effect on type I, II, IV and V collagen. However, upon interaction with CSPG4, it may be involved in degradation and invasion of type I collagen by melanoma cells. This chain is Matrix metalloproteinase-16 (Mmp16), found in Rattus norvegicus (Rat).